The following is a 24-amino-acid chain: Brevinin-1SY (24 aa).

A disulfide bond links Cys18 and Cys24.

As to expression, expressed by the skin glands.

Its subcellular location is the secreted. Functionally, antibacterial activity against Gram-positive bacterium S.aureus and Gram-negative bacterium E.coli. This chain is Brevinin-1SY, found in Lithobates sylvaticus (Wood frog).